Consider the following 413-residue polypeptide: 2,3-bisphosphoglycerate-independent phosphoglycerate mutase (413 aa).

Belongs to the BPG-independent phosphoglycerate mutase family. A-PGAM subfamily.

The catalysed reaction is (2R)-2-phosphoglycerate = (2R)-3-phosphoglycerate. Its pathway is carbohydrate degradation; glycolysis; pyruvate from D-glyceraldehyde 3-phosphate: step 3/5. In terms of biological role, catalyzes the interconversion of 2-phosphoglycerate and 3-phosphoglycerate. In Metallosphaera sedula (strain ATCC 51363 / DSM 5348 / JCM 9185 / NBRC 15509 / TH2), this protein is 2,3-bisphosphoglycerate-independent phosphoglycerate mutase.